Consider the following 364-residue polypeptide: Dihydroorotate dehydrogenase (quinone) (364 aa).

FMN contacts are provided by residues Ala61–Lys65 and Thr85. Position 65 (Lys65) interacts with substrate. Asn110–Phe114 contacts substrate. Residues Asn139 and Asn170 each coordinate FMN. Asn170 lines the substrate pocket. Ser173 serves as the catalytic Nucleophile. Asn175 contributes to the substrate binding site. FMN-binding residues include Lys215 and Ser243. A substrate-binding site is contributed by Asn244–Thr245. FMN-binding positions include Gly266, Gly295, and Tyr316–Thr317.

It belongs to the dihydroorotate dehydrogenase family. Type 2 subfamily. In terms of assembly, monomer. It depends on FMN as a cofactor.

The protein resides in the cell membrane. The enzyme catalyses (S)-dihydroorotate + a quinone = orotate + a quinol. The protein operates within pyrimidine metabolism; UMP biosynthesis via de novo pathway; orotate from (S)-dihydroorotate (quinone route): step 1/1. Catalyzes the conversion of dihydroorotate to orotate with quinone as electron acceptor. The chain is Dihydroorotate dehydrogenase (quinone) from Brucella anthropi (strain ATCC 49188 / DSM 6882 / CCUG 24695 / JCM 21032 / LMG 3331 / NBRC 15819 / NCTC 12168 / Alc 37) (Ochrobactrum anthropi).